The sequence spans 461 residues: Squalene synthase BSS (461 aa).

The NADP(+) site is built by arginine 51 and arginine 76. Mg(2+)-binding residues include aspartate 79, glutamate 82, and aspartate 83. NADP(+) contacts are provided by arginine 219, lysine 322, and arginine 324. Residues 430 to 450 (VTQHWWSILIFLISIAVFFIP) traverse the membrane as a helical segment.

The protein belongs to the phytoene/squalene synthase family. Requires Mg(2+) as cofactor.

It is found in the endoplasmic reticulum membrane. The catalysed reaction is 2 (2E,6E)-farnesyl diphosphate + NADPH + H(+) = squalene + 2 diphosphate + NADP(+). The enzyme catalyses 2 (2E,6E)-farnesyl diphosphate + NADH + H(+) = squalene + 2 diphosphate + NAD(+). Converts farnesyl diphosphate (FPP) into squalene, a precursor for sterol biosynthesis in eukaryotes. Does not possess botryococcene synthase activity. The polypeptide is Squalene synthase BSS (Botryococcus braunii (Green alga)).